Reading from the N-terminus, the 164-residue chain is Axial regulator YABBY 5 (164 aa).

The C4-type zinc-finger motif lies at 16-43 (CNFCNIILAVNVPCSSLFDIVTVRCGHC).

Belongs to the YABBY family. In terms of assembly, binds to LUG and LUH; these complexes promote adaxial cell identity in leaves as well as embryonic shoot apical meristem (SAM) initiation and postembryonic SAM maintenance. Interacts with SPL/NZZ and SPEAR2.

The protein resides in the nucleus. In terms of biological role, promotes adaxial cell identity. Regulates the initiation of embryonic shoot apical meristem (SAM) development. This is Axial regulator YABBY 5 (YAB5) from Arabidopsis thaliana (Mouse-ear cress).